A 607-amino-acid polypeptide reads, in one-letter code: uncharacterized protein (607 aa).

Disordered stretches follow at residues 28–114 (GAER…KLRR) and 142–188 (DQER…NNSS). Residues 35-50 (SSHGSINSRSASPNKA) show a composition bias toward polar residues. 2 stretches are compositionally biased toward basic and acidic residues: residues 90 to 102 (VNGE…DHDT) and 161 to 174 (KENK…KDLS). The segment covering 177–188 (SSSSMKKANNSS) has biased composition (low complexity). 2 consecutive PHD-type zinc fingers follow at residues 263–312 (NDYC…CKHH) and 406–459 (PILC…HSDH).

This is an uncharacterized protein from Schizosaccharomyces pombe (strain 972 / ATCC 24843) (Fission yeast).